The following is a 134-amino-acid chain: Snaclec alboaggregin-A subunit alpha' (134 aa).

The 134-residue stretch at 1–134 (DFHCLPGWSA…NPFVCKFPPQ (134 aa)) folds into the C-type lectin domain. Intrachain disulfides connect Cys-4/Cys-15, Cys-32/Cys-129, and Cys-104/Cys-121.

Belongs to the snaclec family. In terms of assembly, heterotetramer of the subunits alpha, alpha', beta and beta'; disulfide-linked. Expressed by the venom gland.

The protein localises to the secreted. In terms of biological role, potent platelet activator that aggregates platelets via both GPIbalpha (GP1BA) and GPVI (GP6). Induces a tyrosine phosphorylation profile in platelets that resembles this produced by collagen, involving the time dependent tyrosine phosphorylation of Fc receptor gamma chain (FCGR1A), phospholipase Cgamma2 (PLCG2), and LAT. The chain is Snaclec alboaggregin-A subunit alpha' from Trimeresurus albolabris (White-lipped pit viper).